Consider the following 213-residue polypeptide: IVGGSVTTIGQYPSMASLLFNNRQVCGGVIINNRSVLTAAHCPFGDAVSSWRFRVGSTNANSGGTVFTLSTIINHPSYNRWTLDNDISIMRAASNIGTSASVQPAGIAGSNYNLGDNQVVWATGWGATSAGGSLARFPGVNARHVQIWTVNQNTCASRYAAIGRTVTANMLCSGWLDVGGRDQCQGDSGGPLYHNRIVVAVVSRYTSWIQSNA.

Positions 1–213 constitute a Peptidase S1 domain; the sequence is IVGGSVTTIG…RYTSWIQSNA (213 aa). C26 and C42 are joined by a disulfide. Catalysis depends on charge relay system residues H41 and D86. Residues C155 and C172 are joined by a disulfide bond. S188 serves as the catalytic Charge relay system.

Belongs to the peptidase S1 family. Hemolymph and saliva of the larval form (caterpillar).

Its subcellular location is the secreted. It localises to the extracellular space. With respect to regulation, sensitive to serine proteinase inhibitors and thiol proteinase inhibitors. In terms of biological role, fibrinolytic activity; shows preferential cleavage of Arg-Gly bonds in all three fibrinogen chains. Contact with the caterpillars causes severe bleeding, due the anticoagulant effect of the protein. This chain is Achelase-1, found in Lonomia achelous (Giant silkworm moth).